The primary structure comprises 428 residues: CinA-like protein (428 aa).

Belongs to the CinA family.

The chain is CinA-like protein from Gemmatimonas aurantiaca (strain DSM 14586 / JCM 11422 / NBRC 100505 / T-27).